We begin with the raw amino-acid sequence, 331 residues long: UPF0194 membrane protein YbhG (331 aa).

An N-terminal signal peptide occupies residues 1–15 (MKKPVVIGLAVVVLA). Residues 107–208 (EEIAQAAAAV…LNLQDSTLIA (102 aa)) adopt a coiled-coil conformation.

It belongs to the UPF0194 family.

The protein localises to the periplasm. The protein is UPF0194 membrane protein YbhG of Escherichia coli O139:H28 (strain E24377A / ETEC).